The sequence spans 246 residues: Salivary antigen SP32 (246 aa).

A signal peptide spans 1-23 (MSGHILTVGLIVVVAHCATLSSS). A disordered region spans residues 51-160 (DKFYPDISDD…PDLSKYKNSP (110 aa)). Residues 65 to 78 (VVRDNGRKGGDRGR) are compositionally biased toward basic and acidic residues. The span at 79 to 124 (QSTPSGKESHPSATQTGGRRPSQSPCGESRPSGSATSGRRPSQSPR) shows a compositional bias: polar residues. The span at 141–155 (QQDRRQNKKQPDLSK) shows a compositional bias: basic and acidic residues.

In terms of assembly, interacts with human DSG1. Interacts with human DSG3. Salivary gland (at protein level).

The protein resides in the secreted. Down-regulates the expression of CD86 and HLA-DR on the surface of lipopolysaccharide (LPS)-stimulated human peripheral blood mononuclear cells (PBMCs). Reduces LPS-induced secretion of IL-1beta/IL1B in human PBMCs. Reduces LPS-induced secretion of various cytokines, such as IL-1beta, TNF-alpha/TNF, MCP-1/CCL2, IL6, IL27 and IL-1alpha/IL1A, in host cultured macrophages probably via inhibition of NF-kappa-B signaling pathway. Reduces production of IFN-gamma/IFNG, IL4 and IL6 in human lymphocytes activated with PMA/ionomycin. Exhibits anti-inflammatory activity in carrageenan-induced paw edema model in rats. The chain is Salivary antigen SP32 from Phlebotomus papatasi (Sandfly).